Reading from the N-terminus, the 186-residue chain is Elongation factor P (186 aa).

Belongs to the elongation factor P family.

Its subcellular location is the cytoplasm. The protein operates within protein biosynthesis; polypeptide chain elongation. Its function is as follows. Involved in peptide bond synthesis. Stimulates efficient translation and peptide-bond synthesis on native or reconstituted 70S ribosomes in vitro. Probably functions indirectly by altering the affinity of the ribosome for aminoacyl-tRNA, thus increasing their reactivity as acceptors for peptidyl transferase. This Cupriavidus metallidurans (strain ATCC 43123 / DSM 2839 / NBRC 102507 / CH34) (Ralstonia metallidurans) protein is Elongation factor P.